Consider the following 214-residue polypeptide: Adenylate kinase (214 aa).

10 to 15 (GAGKGT) lines the ATP pocket. An NMP region spans residues 30–59 (STGDMLRAAVKAGTPLGLEAKKVMDAGQLV). AMP is bound by residues Thr-31, Arg-36, 57–59 (QLV), 85–88 (GFPR), and Gln-92. Residues 122–159 (GRRVHPGSGRVYHIVYNPPKVEGKDDVTGEDLAIRPDD) are LID. Residues Arg-123 and 132-133 (VY) each bind ATP. AMP is bound by residues Arg-156 and Arg-167. Gln-200 is an ATP binding site.

Belongs to the adenylate kinase family. In terms of assembly, monomer.

The protein resides in the cytoplasm. The enzyme catalyses AMP + ATP = 2 ADP. It participates in purine metabolism; AMP biosynthesis via salvage pathway; AMP from ADP: step 1/1. Functionally, catalyzes the reversible transfer of the terminal phosphate group between ATP and AMP. Plays an important role in cellular energy homeostasis and in adenine nucleotide metabolism. This is Adenylate kinase from Shewanella loihica (strain ATCC BAA-1088 / PV-4).